The primary structure comprises 129 residues: Glycine cleavage system H protein (129 aa).

The 83-residue stretch at 24 to 106 (SYTVGITEHA…YGDGWFFRIM (83 aa)) folds into the Lipoyl-binding domain. Position 65 is an N6-lipoyllysine (lysine 65).

This sequence belongs to the GcvH family. In terms of assembly, the glycine cleavage system is composed of four proteins: P, T, L and H. (R)-lipoate serves as cofactor.

Its function is as follows. The glycine cleavage system catalyzes the degradation of glycine. The H protein shuttles the methylamine group of glycine from the P protein to the T protein. The polypeptide is Glycine cleavage system H protein (Shewanella denitrificans (strain OS217 / ATCC BAA-1090 / DSM 15013)).